We begin with the raw amino-acid sequence, 300 residues long: GTPase Era (300 aa).

Positions 8–176 (RCGYVAIVGR…ESLIASHLPE (169 aa)) constitute an Era-type G domain. The G1 stretch occupies residues 16-23 (GRPNVGKS). Residue 16–23 (GRPNVGKS) participates in GTP binding. A G2 region spans residues 42 to 46 (QTTRH). Positions 63 to 66 (DTPG) are G3. GTP contacts are provided by residues 63–67 (DTPGM) and 125–128 (NKTD). Residues 125 to 128 (NKTD) form a G4 region. The segment at 155–157 (ISA) is G5. The 85-residue stretch at 199 to 283 (VREKIMRQLG…MLNLWVKVKG (85 aa)) folds into the KH type-2 domain.

Belongs to the TRAFAC class TrmE-Era-EngA-EngB-Septin-like GTPase superfamily. Era GTPase family. In terms of assembly, monomer.

It localises to the cytoplasm. The protein resides in the cell inner membrane. Functionally, an essential GTPase that binds both GDP and GTP, with rapid nucleotide exchange. Plays a role in 16S rRNA processing and 30S ribosomal subunit biogenesis and possibly also in cell cycle regulation and energy metabolism. The polypeptide is GTPase Era (Pseudomonas savastanoi pv. phaseolicola (strain 1448A / Race 6) (Pseudomonas syringae pv. phaseolicola (strain 1448A / Race 6))).